A 101-amino-acid polypeptide reads, in one-letter code: Small ribosomal subunit protein uS14 (101 aa).

It belongs to the universal ribosomal protein uS14 family. Part of the 30S ribosomal subunit. Contacts proteins S3 and S10.

Functionally, binds 16S rRNA, required for the assembly of 30S particles and may also be responsible for determining the conformation of the 16S rRNA at the A site. In Stenotrophomonas maltophilia (strain K279a), this protein is Small ribosomal subunit protein uS14.